The sequence spans 849 residues: Neprilysin-1 (849 aa).

The Cytoplasmic segment spans residues Met1 to Leu113. A compositionally biased stretch (low complexity) spans Gln41 to Gln61. Residues Gln41–Lys63 are disordered. A helical; Signal-anchor for type II membrane protein transmembrane segment spans residues Leu114 to Phe134. Over Ala135–Trp849 the chain is Extracellular. Over residues Leu146–Asn155 the composition is skewed to basic and acidic residues. The segment at Leu146–Glu167 is disordered. The region spanning Ile172–Trp849 is the Peptidase M13 domain. Intrachain disulfides connect Cys173–Cys178, Cys196–Cys834, Cys204–Cys794, Cys260–Cys512, and Cys721–Cys846. N-linked (GlcNAc...) asparagine glycans are attached at residues Asn309, Asn326, Asn393, Asn589, and Asn599. A Zn(2+)-binding site is contributed by His684. Residue Glu685 is part of the active site. A Zn(2+)-binding site is contributed by His688. Asn709 is a glycosylation site (N-linked (GlcNAc...) asparagine). Glu746 lines the Zn(2+) pocket. The active-site Proton donor is Asp750. Asn778 is a glycosylation site (N-linked (GlcNAc...) asparagine).

The protein belongs to the peptidase M13 family. It depends on Zn(2+) as a cofactor. In terms of tissue distribution, expressed in the testicular tube, near and in the seminal vesicles. In adults and third-instar larvae, expressed in the midgut and in the mushroom bodies of the brain and neurons in the pars intercerebralis. Also expressed in neurons of the ventral ganglion and imaginal disks (wing and leg) of third-instar larvae. In stage 17 embryos, expressed in the peripheral nervous system, pharynx and midgut.

It is found in the cell membrane. It catalyses the reaction Preferential cleavage of polypeptides between hydrophobic residues, particularly with Phe or Tyr at P1'.. Metalloendoprotease which functions in fertility and memory formation. Required in the dorsal paired medial neurons and alpha/beta mushroom body neurons for the proper formation of long-term and middle-term memories. Required in males to maximise egg-laying in female mates and is also required in females for their fertility. In Drosophila melanogaster (Fruit fly), this protein is Neprilysin-1.